A 188-amino-acid chain; its full sequence is Large ribosomal subunit protein uL10 (188 aa).

This sequence belongs to the universal ribosomal protein uL10 family. As to quaternary structure, part of the ribosomal stalk of the 50S ribosomal subunit. The N-terminus interacts with L11 and the large rRNA to form the base of the stalk. The C-terminus forms an elongated spine to which L12 dimers bind in a sequential fashion forming a multimeric L10(L12)X complex.

In terms of biological role, forms part of the ribosomal stalk, playing a central role in the interaction of the ribosome with GTP-bound translation factors. This is Large ribosomal subunit protein uL10 from Crocosphaera subtropica (strain ATCC 51142 / BH68) (Cyanothece sp. (strain ATCC 51142)).